The following is a 140-amino-acid chain: uncharacterized protein (140 aa).

The disordered stretch occupies residues 121 to 140 (EEVKNGELIDPNVTTEDEKL).

This is an uncharacterized protein from Schizosaccharomyces pombe (strain 972 / ATCC 24843) (Fission yeast).